Reading from the N-terminus, the 467-residue chain is ATP-dependent protease ATPase subunit HslU (467 aa).

ATP-binding positions include Ile-18, 60 to 65 (GVGKTE), Asp-280, Glu-345, and Arg-417.

Belongs to the ClpX chaperone family. HslU subfamily. In terms of assembly, a double ring-shaped homohexamer of HslV is capped on each side by a ring-shaped HslU homohexamer. The assembly of the HslU/HslV complex is dependent on binding of ATP.

The protein localises to the cytoplasm. Its function is as follows. ATPase subunit of a proteasome-like degradation complex; this subunit has chaperone activity. The binding of ATP and its subsequent hydrolysis by HslU are essential for unfolding of protein substrates subsequently hydrolyzed by HslV. HslU recognizes the N-terminal part of its protein substrates and unfolds these before they are guided to HslV for hydrolysis. The sequence is that of ATP-dependent protease ATPase subunit HslU from Lactobacillus helveticus (strain DPC 4571).